The primary structure comprises 189 residues: Dual specificity phosphatase 21 (189 aa).

The Tyrosine-protein phosphatase domain maps to 20-161 (GLSQITASLF…LIHYEFKLFS (142 aa)). The interval 43 to 128 (SNNHITTIIN…YLMKYHNMTL (86 aa)) is sufficient for mitochondrial localization. Catalysis depends on Cys105, which acts as the Phosphocysteine intermediate.

Belongs to the protein-tyrosine phosphatase family. Non-receptor class dual specificity subfamily. As to quaternary structure, microtubule inner protein component of sperm flagellar doublet microtubules. Selectively expressed in testis.

The protein resides in the cytoplasm. It is found in the nucleus. It localises to the mitochondrion inner membrane. The protein localises to the cytoskeleton. Its subcellular location is the flagellum axoneme. It carries out the reaction O-phospho-L-tyrosyl-[protein] + H2O = L-tyrosyl-[protein] + phosphate. The enzyme catalyses O-phospho-L-seryl-[protein] + H2O = L-seryl-[protein] + phosphate. The catalysed reaction is O-phospho-L-threonyl-[protein] + H2O = L-threonyl-[protein] + phosphate. Its function is as follows. Protein phosphatase component of the sperm flagellar doublet microtubules. May act as a regulator of sperm motility by mediating dephosphorylation of sperm doublet microtubule proteins. Can dephosphorylate single and diphosphorylated synthetic MAPK peptides, with preference for the phosphotyrosine and diphosphorylated forms over phosphothreonine. This Mus musculus (Mouse) protein is Dual specificity phosphatase 21.